The sequence spans 125 residues: 17 kDa gas vesicle protein (125 aa).

This sequence belongs to the gas vesicle GvpC family.

The protein localises to the gas vesicle. Gas vesicles (GV) are hollow, gas filled proteinaceous nanostructures. During planktonic growth they allow positioning of the organism at a favorable depth for light or nutrient acquisition. The protein is 17 kDa gas vesicle protein of Dactylococcopsis salina (strain PCC 8305) (Myxobactron salinum).